Reading from the N-terminus, the 365-residue chain is NAD(P)H-quinone oxidoreductase subunit 1, chloroplastic (365 aa).

Helical transmembrane passes span 32–52 (LFPILILVLGITIGVLVIVWL), 98–118 (YLFSIGPSIAVISILLGYLII), 129–149 (LSIGVFLWIAVSSIAPIGLLM), 257–279 (LFYVASYLNLLISSLFVTVLYLG), 302–322 (VFGTTIGIFITLAKTFLFLFI), and 338–358 (LLNLGWKFLLPISLGNLLLTT).

It belongs to the complex I subunit 1 family. NDH is composed of at least 16 different subunits, 5 of which are encoded in the nucleus.

Its subcellular location is the plastid. The protein localises to the chloroplast thylakoid membrane. It catalyses the reaction a plastoquinone + NADH + (n+1) H(+)(in) = a plastoquinol + NAD(+) + n H(+)(out). The catalysed reaction is a plastoquinone + NADPH + (n+1) H(+)(in) = a plastoquinol + NADP(+) + n H(+)(out). Functionally, NDH shuttles electrons from NAD(P)H:plastoquinone, via FMN and iron-sulfur (Fe-S) centers, to quinones in the photosynthetic chain and possibly in a chloroplast respiratory chain. The immediate electron acceptor for the enzyme in this species is believed to be plastoquinone. Couples the redox reaction to proton translocation, and thus conserves the redox energy in a proton gradient. This Spinacia oleracea (Spinach) protein is NAD(P)H-quinone oxidoreductase subunit 1, chloroplastic.